The primary structure comprises 707 residues: F-box/WD repeat-containing protein 7 (707 aa).

Positions 1–151 are disordered; that stretch reads MNQELLSVGS…SVTNSSSIVD (151 aa). S26 bears the Phosphoserine; by ATM mark. Residues 57–68 show a composition bias toward low complexity; the sequence is GEVVGVEPRPGG. Residues 69–84 show a composition bias toward polar residues; the sequence is QNDSQQGQLEENNNRF. A compositionally biased stretch (acidic residues) spans 87 to 129; the sequence is VDEDSSGNQEEQEEDEEHAGEQDEEDEEEEEMDQESDDFDQSD. Residues 130-139 are compositionally biased toward basic and acidic residues; the sequence is DSSREDEHTH. A Phosphothreonine modification is found at T205. The residue at position 227 (S227) is a Phosphoserine; by SGK1. In terms of domain architecture, F-box spans 278–324; it reads RDFISLLPKELALYVLSFLEPKDLLQAAQTCRYWRILAEDNLLWREK. WD repeat units lie at residues 378 to 418, 420 to 456, 459 to 498, 500 to 536, 539 to 578, 580 to 618, and 622 to 659; these read GHDD…RTLV, HTGG…CIHT, GHTS…HVLM, HVAA…CLHT, GHTN…HTLT, HQSL…QTLQ, and KHQS…FIRN.

In terms of assembly, homodimer; homodimerization plays a role in substrate binding and/or ubiquitination and degradation. Component of the SCF(FBXW7) complex consisting of CUL1, RBX1, SKP1 and FBXW7. Interacts (via F-box domain) with SKP1. Interacts (via F-box domain) with pseudophosphatase STYX; the interaction is direct and prevents FBXW7 interaction with SKP1. Interacts with cyclin-E (CCNE1 or CCNE2). Interacts with PSEN1. Forms a trimeric complex with NOTCH1 and SGK1. Interacts with NOTCH1 intracellular domain/NICD and NOTCH4 intracellular domain/NICD. Interacts with NOTCH2 intracellular domain (N2ICD). Interacts with MYC (when phosphorylated). Interacts with USP28, counteracting ubiquitination of MYC. Interacts with JUN. Found in a complex with JUN and PRR7. Interacts with JUN and PRR7; the interaction inhibits ubiquitination-mediated JUN degradation, promoting its phosphorylation and transcriptional activity. Interacts (when phosphorylated at Thr-205) with PIN1, disrupting FBXW7 dimerization and promoting FBXW7 autoubiquitination and degradation. Interacts with UBE2QL1. Interacts with FAM83D; promotes FBXW7 degradation. Interacts with MYCN; FBXW7 competes with AURKA for binding to unphosphorylated MYCN but not for binding to phosphorylated MYCN. Interacts with STOML1. Interacts with NFE2L1. Interacts with USP36, counteracting ubiquitination of MYC. Interacts with NR1D1. Interacts with RICTOR; mediates RICTOR ubiquitination and degradation. Interacts with USP38, counteracting ubiquitination of MYC. (Microbial infection) Interacts (via WD repeats) with SV40 large T antigen (via CPD region). Post-translationally, phosphorylation at Thr-205 promotes interaction with PIN1, leading to disrupt FBXW7 dimerization and promoting FBXW7 autoubiquitination and degradation. Phosphorylated by ATM at Ser-26 in response to DNA damage, promoting recruitment to DNA damage sites and 'Lys-63'-linked ubiquitination of phosphorylated XRCC4. Ubiquitinated: autoubiquitinates following phosphorylation at Thr-205 and subsequent interaction with PIN1. Ubiquitination leads to its proteasomal degradation. In terms of tissue distribution, widely expressed. Expressed in brain.

It is found in the nucleus. The protein resides in the nucleoplasm. Its subcellular location is the chromosome. It localises to the cytoplasm. The protein localises to the nucleolus. It functions in the pathway protein modification; protein ubiquitination. In terms of biological role, substrate recognition component of a SCF (SKP1-CUL1-F-box protein) E3 ubiquitin-protein ligase complex which mediates the ubiquitination and subsequent proteasomal degradation of target proteins. Recognizes and binds phosphorylated sites/phosphodegrons within target proteins and thereafter brings them to the SCF complex for ubiquitination. Identified substrates include cyclin-E (CCNE1 or CCNE2), DISC1, JUN, MYC, NOTCH1 released notch intracellular domain (NICD), NFE2L1, NOTCH2, MCL1, MLST8, RICTOR, and probably PSEN1. Acts as a negative regulator of JNK signaling by binding to phosphorylated JUN and promoting its ubiquitination and subsequent degradation. Involved in bone homeostasis and negative regulation of osteoclast differentiation. Regulates the amplitude of the cyclic expression of hepatic core clock genes and genes involved in lipid and glucose metabolism via ubiquitination and proteasomal degradation of their transcriptional repressor NR1D1; CDK1-dependent phosphorylation of NR1D1 is necessary for SCF(FBXW7)-mediated ubiquitination. Also able to promote 'Lys-63'-linked ubiquitination in response to DNA damage. The SCF(FBXW7) complex facilitates double-strand break repair following phosphorylation by ATM: phosphorylation promotes localization to sites of double-strand breaks and 'Lys-63'-linked ubiquitination of phosphorylated XRCC4, enhancing DNA non-homologous end joining. In Homo sapiens (Human), this protein is F-box/WD repeat-containing protein 7.